Reading from the N-terminus, the 890-residue chain is Translation initiation factor IF-2 (890 aa).

A disordered region spans residues 45 to 302; that stretch reads LIDHLNQKNS…SSLQQGFQKP (258 aa). Residues 67–81 are compositionally biased toward polar residues; sequence STLNIPSTGGKSKSV. Residues 92–217 show a composition bias toward basic and acidic residues; that stretch reads VKRDPQEAER…RMAEENKWTD (126 aa). Residues 252-266 show a composition bias toward basic residues; it reads GRGRNAKAARPKKGN. Residues 267–280 are compositionally biased toward basic and acidic residues; that stretch reads KHAESKADREEARA. The 170-residue stretch at 389–558 folds into the tr-type G domain; sequence PRAPVVTIMG…LLQAEVLELK (170 aa). The interval 398–405 is G1; it reads GHVDHGKT. 398 to 405 contacts GTP; the sequence is GHVDHGKT. The tract at residues 423 to 427 is G2; that stretch reads GITQH. A G3 region spans residues 444–447; it reads DTPG. GTP-binding positions include 444–448 and 498–501; these read DTPGH and NKID. Residues 498–501 form a G4 region; the sequence is NKID. The segment at 534 to 536 is G5; the sequence is SAK. At K808 the chain carries N6-acetyllysine.

The protein belongs to the TRAFAC class translation factor GTPase superfamily. Classic translation factor GTPase family. IF-2 subfamily.

It is found in the cytoplasm. Its function is as follows. One of the essential components for the initiation of protein synthesis. Protects formylmethionyl-tRNA from spontaneous hydrolysis and promotes its binding to the 30S ribosomal subunits. Also involved in the hydrolysis of GTP during the formation of the 70S ribosomal complex. The protein is Translation initiation factor IF-2 of Shigella dysenteriae serotype 1 (strain Sd197).